The sequence spans 879 residues: Beta-mannosidase (879 aa).

Positions 1–19 are cleaved as a signal peptide; that stretch reads MHLHLLLILALFRAGCVVA. N-linked (GlcNAc...) asparagine glycosylation is found at N35, N77, N89, and N113. Cysteines 167 and 176 form a disulfide. 190-192 is a binding site for substrate; it reads WDW. N-linked (GlcNAc...) asparagine glycans are attached at residues N226, N297, and N302. N456 lines the substrate pocket. E457 functions as the Proton donor in the catalytic mechanism. 3 disulfides stabilise this stretch: C540–C629, C732–C761, and C764–C769. E554 acts as the Nucleophile in catalysis. Residue N736 is glycosylated (N-linked (GlcNAc...) asparagine). Residues N803 and N807 are each glycosylated (N-linked (GlcNAc...) asparagine).

The protein belongs to the glycosyl hydrolase 2 family. Monomer. As to expression, highest level in liver, high levels in lung, testis, skin and spleen, moderate level in thymus. Activity found in plasma, kidney, liver, spleen, pancreas, brain, testis, epididymis, heart, lung and skeletal muscle.

It is found in the lysosome. It carries out the reaction Hydrolysis of terminal, non-reducing beta-D-mannose residues in beta-D-mannosides.. It functions in the pathway glycan metabolism; N-glycan degradation. Its function is as follows. Exoglycosidase that cleaves the single beta-linked mannose residue from the non-reducing end of all N-linked glycoprotein oligosaccharides. This is Beta-mannosidase from Mus musculus (Mouse).